The sequence spans 417 residues: MVSILQLQTRTEASPASSASAAATRIFAVRRQQQEQEGEEEEEEFEFQERMDLSGAQGELPIPMHASAAASPFAGMGAHGGAGGGHVVELHRHEHVGNNGQAMAMASPPPTNVAVAAEQEGSPVAGKKRGGMAVVGGGGGVAVKYRECLKNHAAAIGGNATDGCGEFMPSGEEGSLEALKCSACGCHRNFHRKEADDLDADSCAAALRAAAGRHHHLLGPALPHHHHKNGGGLLVAGGDPYGAAYAAARALPPPPPPPPHGHHHHHQIIMPLNMIHTSESDEMDVSGGGGGVGRGGGSSSSSKKRFRTKFTAEQKARMLEFAERVGWRLQKLDDAMVHHFCQEIGVKRRVLKVWMHNNKHNLAKKPLPSSPPPPPQIPPMSMPPSPPPPQIPPMSMPPSPPPMPMPMPPSPPQLKLE.

The span at 1 to 12 shows a compositional bias: polar residues; that stretch reads MVSILQLQTRTE. Disordered regions lie at residues 1 to 22 and 31 to 50; these read MVSI…ASAA and RQQQ…FQER. Over residues 13-22 the composition is skewed to low complexity; that stretch reads ASPASSASAA. Acidic residues predominate over residues 36–46; the sequence is QEGEEEEEEFE. The ZF-HD dimerization-type; degenerate zinc-finger motif lies at 145–194; that stretch reads YRECLKNHAAAIGGNATDGCGEFMPSGEEGSLEALKCSACGCHRNFHRKE. Disordered stretches follow at residues 281-309 and 361-417; these read DEMD…FRTK and NLAK…LKLE. Residues 286–298 show a composition bias toward gly residues; sequence SGGGGGVGRGGGS. Positions 303 to 366 form a DNA-binding region, homeobox; the sequence is KKRFRTKFTA…NNKHNLAKKP (64 aa). The segment covering 368–417 has biased composition (pro residues); the sequence is PSSPPPPPQIPPMSMPPSPPPPQIPPMSMPPSPPPMPMPMPPSPPQLKLE.

In terms of assembly, homo- and heterodimer with other ZFHD proteins.

The protein localises to the nucleus. Its function is as follows. Putative transcription factor. In Oryza sativa subsp. japonica (Rice), this protein is Zinc-finger homeodomain protein 4 (ZHD4).